Here is a 548-residue protein sequence, read N- to C-terminus: MDLNAIIEKMETGDQDAALTALQTYNKEKSQCFSFTSGEEEDRERLGELVLSFLERDLQPSCQLACLETIRILSRDKKSLSPFATRHAMQILIRHAGLGQGEGVTPEIPDLEVIVEALKCLCNIVFNSEAAQEAAADLQLMVGLAERLKQCREPQWNHDVRFFDLRLTFLITALRVDVRAQLAHELRGVSLLSEALDATFGLCWPDMYEVARAGFDGCSELPPLGRQETERVMEILKILFNVTFDSNRRHVDEEEAATYRHLGAILRHCIMSSAEGEERTEEMHSHTVNLLGNLPLPCLDVLLMPKVQQGSIEYMGVNMDAVKVLVEFMEKRLDRGNKLKETLLPSLNLLTESARIHRETRKFLRNKVLPPLRDVKNRPEVGNALRNKLVRLMTHIDTDVKHCAAEFLFVLCKESVSRFIKYTGYGNAAGLLAARGLMRGGRDPGHYSEDEDSDTEEYREAKPHINPVTGRVEEEQPNPMEGMTDEQKEYEAMKLVNMFDKLSREQVIQPMKIGADGKMTSMEPHELHHLASQQFGESNNSDSDSDTN.

Disordered regions lie at residues 443-484 and 517-548; these read DPGH…EGMT and GKMTSMEPHELHHLASQQFGESNNSDSDSDTN.

Belongs to the synembryn family.

It localises to the cytoplasm. It is found in the cell cortex. In terms of biological role, chaperone that specifically binds and folds nascent G alpha proteins prior to G protein heterotrimer formation, promoting their stability and activity: folds GNAI1, GNAO1, GNA13 and GNAQ. Does not fold G(s) G-alpha proteins GNAS nor GNAL. Also acts as a guanine nucleotide exchange factor (GEF) for G alpha proteins by stimulating exchange of bound GDP for free GTP. This Danio rerio (Zebrafish) protein is Chaperone Ric-8A (ric8a).